The following is a 186-amino-acid chain: Ribosome-recycling factor (186 aa).

It belongs to the RRF family.

The protein resides in the cytoplasm. Responsible for the release of ribosomes from messenger RNA at the termination of protein biosynthesis. May increase the efficiency of translation by recycling ribosomes from one round of translation to another. The polypeptide is Ribosome-recycling factor (Nitratiruptor sp. (strain SB155-2)).